Here is a 378-residue protein sequence, read N- to C-terminus: MKLKEVTEGKVRIFVPDPKEYMIEGKFDPSWAPVFYNPKMTFNRDLSVIVVSLLKPKIILDALSATGIRGIRYYVESWKSEQLILNDKNSTAASLIQINVKNNGIENAKIYNKDANALLYEIKSEYIDIDPFGSPVPFILSSVNATIRNGIVAFTATDLSPLEGSSRTSCRRKYDAINYKLSSSKELGLRILIGKIIREAATLEKTVHPLFSFYADYYYRLFVIVESGARKADENINKNLKYFGECPRCGFQTFVDENCKTKCPICGENFIIIGPLYIGPLHNMEFLKRMIDTYSDFNYLSSFNRIQKLLNVIEKEAKYKSVFYNISKLASKLKVSAIPPIDSILECLGDASKTHFAPTGIRTDKGYEEIIRCVKSLR.

A Trm1 methyltransferase domain is found at 4-374; it reads KEVTEGKVRI…KGYEEIIRCV (371 aa). S-adenosyl-L-methionine-binding residues include Arg-44, Arg-69, Asp-87, Asp-114, and Ala-115. The Zn(2+) site is built by Cys-246, Cys-249, Cys-263, and Cys-266.

It belongs to the class I-like SAM-binding methyltransferase superfamily. Trm1 family.

It carries out the reaction guanosine(26) in tRNA + 2 S-adenosyl-L-methionine = N(2)-dimethylguanosine(26) in tRNA + 2 S-adenosyl-L-homocysteine + 2 H(+). In terms of biological role, dimethylates a single guanine residue at position 26 of a number of tRNAs using S-adenosyl-L-methionine as donor of the methyl groups. The chain is tRNA (guanine(26)-N(2))-dimethyltransferase from Saccharolobus islandicus (strain L.S.2.15 / Lassen #1) (Sulfolobus islandicus).